The primary structure comprises 197 residues: Putative manganese efflux pump MntP (197 aa).

Transmembrane regions (helical) follow at residues 8–28, 43–63, 66–86, 123–143, 146–166, and 177–197; these read VILLAIALAMDAFAVSIGLGA, VYAALYFGIAQGVMPLIGYLL, VLLGWLATAAPWIGGGILIVL, LAIATSIDAMAAGFTLNLLAL, WLACLIIAIVTAGFGFFGIYL, and KAEILGGLVLIAIGVKVMLFS.

It belongs to the MntP (TC 9.B.29) family.

The protein resides in the cell inner membrane. Its function is as follows. Probably functions as a manganese efflux pump. In Psychrobacter arcticus (strain DSM 17307 / VKM B-2377 / 273-4), this protein is Putative manganese efflux pump MntP.